We begin with the raw amino-acid sequence, 284 residues long: tRNA pseudouridine synthase A (284 aa).

D62 functions as the Nucleophile in the catalytic mechanism. Position 120 (Y120) interacts with substrate.

The protein belongs to the tRNA pseudouridine synthase TruA family. In terms of assembly, homodimer.

The catalysed reaction is uridine(38/39/40) in tRNA = pseudouridine(38/39/40) in tRNA. Formation of pseudouridine at positions 38, 39 and 40 in the anticodon stem and loop of transfer RNAs. The chain is tRNA pseudouridine synthase A from Thermosynechococcus vestitus (strain NIES-2133 / IAM M-273 / BP-1).